The primary structure comprises 494 residues: Glycerol kinase (494 aa).

Thr-13 contributes to the ADP binding site. Thr-13, Thr-14, and Ser-15 together coordinate ATP. Thr-13 serves as a coordination point for sn-glycerol 3-phosphate. Position 17 (Arg-17) interacts with ADP. Residues Arg-83, Glu-84, Tyr-135, and Asp-244 each contribute to the sn-glycerol 3-phosphate site. Residues Arg-83, Glu-84, Tyr-135, Asp-244, and Gln-245 each coordinate glycerol. ADP-binding residues include Thr-266 and Gly-309. ATP contacts are provided by Thr-266, Gly-309, Gln-313, and Gly-410. Residues Gly-410 and Asn-414 each contribute to the ADP site.

This sequence belongs to the FGGY kinase family.

It catalyses the reaction glycerol + ATP = sn-glycerol 3-phosphate + ADP + H(+). Its pathway is polyol metabolism; glycerol degradation via glycerol kinase pathway; sn-glycerol 3-phosphate from glycerol: step 1/1. Its activity is regulated as follows. Inhibited by fructose 1,6-bisphosphate (FBP). In terms of biological role, key enzyme in the regulation of glycerol uptake and metabolism. Catalyzes the phosphorylation of glycerol to yield sn-glycerol 3-phosphate. This chain is Glycerol kinase, found in Shewanella sp. (strain MR-7).